A 630-amino-acid polypeptide reads, in one-letter code: Chaperone protein HtpG (630 aa).

Residues 1–341 are a; substrate-binding; the sequence is MTQNATSETL…SADLPLNVSR (341 aa). The segment at 342-558 is b; it reads EILQESRDVR…QNDLSPHLLR (217 aa). Positions 559 to 630 are c; sequence MLKAAGQEVP…KRLNALLLKV (72 aa).

The protein belongs to the heat shock protein 90 family. As to quaternary structure, homodimer.

The protein resides in the cytoplasm. In terms of biological role, molecular chaperone. Has ATPase activity. In Bordetella avium (strain 197N), this protein is Chaperone protein HtpG.